Reading from the N-terminus, the 210-residue chain is Thymidylate kinase (210 aa).

10-17 (GLEGAGKT) contacts ATP.

The protein belongs to the thymidylate kinase family.

The enzyme catalyses dTMP + ATP = dTDP + ADP. In terms of biological role, phosphorylation of dTMP to form dTDP in both de novo and salvage pathways of dTTP synthesis. This chain is Thymidylate kinase, found in Actinobacillus succinogenes (strain ATCC 55618 / DSM 22257 / CCUG 43843 / 130Z).